The following is a 575-amino-acid chain: Hemagglutinin-neuraminidase (575 aa).

Residues 1 to 10 show a composition bias toward basic and acidic residues; it reads MDGDRSKRDS. The disordered stretch occupies residues 1–25; it reads MDGDRSKRDSYWSTSPGGSTTKLVS. At 1 to 37 the chain is on the intravirion side; the sequence is MDGDRSKRDSYWSTSPGGSTTKLVSDSERSGKVDTWL. An incorporation in virion region spans residues 10 to 14; it reads SYWST. The span at 11-24 shows a compositional bias: polar residues; it reads YWSTSPGGSTTKLV. A helical membrane pass occupies residues 38–58; it reads LILAFTQWALSIATVIICIVI. The tract at residues 59–140 is involved in interaction with F protein; sequence AARQGYSMER…RQELTQLCDS (82 aa). The Virion surface segment spans residues 59–575; it reads AARQGYSMER…SIPKLCKAES (517 aa). An N-linked (GlcNAc...) asparagine; by host glycan is attached at Asn-77. 4 disulfide bridges follow: Cys-192-Cys-216, Cys-258-Cys-271, Cys-357-Cys-469, and Cys-463-Cys-473. The tract at residues 254–259 is involved in neuraminidase activity; it reads NRKSCS. Asn-499 and Asn-511 each carry an N-linked (GlcNAc...) asparagine; by host glycan. Cys-535 and Cys-544 are oxidised to a cystine.

It belongs to the paramyxoviruses hemagglutinin-neuraminidase family. Homotetramer; composed of disulfide-linked homodimers. Interacts with F protein trimer. In terms of processing, N-glycosylated; glycans consist of a mixture of high mannose-type oligosaccharides and of complex-type oligosaccharides.

The protein resides in the virion membrane. Its subcellular location is the host cell membrane. The enzyme catalyses Hydrolysis of alpha-(2-&gt;3)-, alpha-(2-&gt;6)-, alpha-(2-&gt;8)- glycosidic linkages of terminal sialic acid residues in oligosaccharides, glycoproteins, glycolipids, colominic acid and synthetic substrates.. Its function is as follows. Attaches the virus to sialic acid-containing cell receptors and thereby initiating infection. Binding of HN protein to the receptor induces a conformational change that allows the F protein to trigger virion/cell membranes fusion. Neuraminidase activity ensures the efficient spread of the virus by dissociating the mature virions from the neuraminic acid containing glycoproteins. In Cavia cutleri (Guinea pig), this protein is Hemagglutinin-neuraminidase (HN).